The sequence spans 222 residues: Probable GTP-binding protein EngB (222 aa).

The region spanning 25-199 is the EngB-type G domain; that stretch reads AGVEVAFAGR…SQLLQNWFDT (175 aa). GTP-binding positions include 33–40, 60–64, 78–81, 145–148, and 178–180; these read GRSNAGKS, GRTQH, DLPG, TKAD, and FSS. Residues S40 and T62 each contribute to the Mg(2+) site.

The protein belongs to the TRAFAC class TrmE-Era-EngA-EngB-Septin-like GTPase superfamily. EngB GTPase family. Mg(2+) is required as a cofactor.

In terms of biological role, necessary for normal cell division and for the maintenance of normal septation. This chain is Probable GTP-binding protein EngB, found in Nitrosomonas europaea (strain ATCC 19718 / CIP 103999 / KCTC 2705 / NBRC 14298).